Consider the following 291-residue polypeptide: Isopentenyl-diphosphate Delta-isomerase I, chloroplastic (291 aa).

The transit peptide at 1–52 (MSTASLFSFPSFHLRSLLPSLSSSSSSSSSRFAPPRLSPIRSPAPRTQLSVR) directs the protein to the chloroplast. Serine 2 carries the post-translational modification N-acetylthreonine. Residues 20-39 (SLSSSSSSSSSRFAPPRLSP) are compositionally biased toward low complexity. Positions 20–43 (SLSSSSSSSSSRFAPPRLSPIRSP) are disordered. Lysine 95 is a binding site for substrate. Mg(2+) is bound by residues histidine 99 and histidine 111. The region spanning 109–261 (LLHRAFSVFL…AVKLSPWFRL (153 aa)) is the Nudix hydrolase domain. Positions 130 and 134 each coordinate substrate. Cysteine 146 is an active-site residue. A substrate-binding site is contributed by serine 147. Positions 147-177 (SHPLYRESELIEENVLGVRNAAQRKLFDELG) match the Nudix box motif. The Mg(2+) site is built by glutamate 206 and glutamate 208. The active site involves glutamate 208.

The protein belongs to the IPP isomerase type 1 family. It depends on Mg(2+) as a cofactor.

The protein resides in the plastid. It localises to the chloroplast. Its subcellular location is the cytoplasm. The catalysed reaction is isopentenyl diphosphate = dimethylallyl diphosphate. Its pathway is isoprenoid biosynthesis; dimethylallyl diphosphate biosynthesis; dimethylallyl diphosphate from isopentenyl diphosphate: step 1/1. It participates in porphyrin-containing compound metabolism; chlorophyll biosynthesis. Catalyzes the 1,3-allylic rearrangement of the homoallylic substrate isopentenyl (IPP) to its highly electrophilic allylic isomer, dimethylallyl diphosphate (DMAPP). The polypeptide is Isopentenyl-diphosphate Delta-isomerase I, chloroplastic (IPP1) (Arabidopsis thaliana (Mouse-ear cress)).